The primary structure comprises 270 residues: Undecaprenyl-diphosphatase 1 (270 aa).

Transmembrane regions (helical) follow at residues 41 to 61 (IEGFSFELLMNAGSLIAVLLV), 88 to 108 (FRFIIYLIIATIPAGVIGVLF), 117 to 137 (KDGVRITAVTLLITGLALFLI), 192 to 212 (FSFLLYIPVSLGGTILSITDI), 218 to 238 (LGELFLPYLFAFIASVIATYF), and 250 to 270 (GNLVYFSIYCFVIGIAVLIFA).

The protein belongs to the UppP family.

The protein localises to the cell membrane. The enzyme catalyses di-trans,octa-cis-undecaprenyl diphosphate + H2O = di-trans,octa-cis-undecaprenyl phosphate + phosphate + H(+). Its function is as follows. Catalyzes the dephosphorylation of undecaprenyl diphosphate (UPP). Confers resistance to bacitracin. This is Undecaprenyl-diphosphatase 1 from Bacillus licheniformis (strain ATCC 14580 / DSM 13 / JCM 2505 / CCUG 7422 / NBRC 12200 / NCIMB 9375 / NCTC 10341 / NRRL NRS-1264 / Gibson 46).